The chain runs to 394 residues: Obg-like ATPase 1 (394 aa).

Positions leucine 21–leucine 285 constitute an OBG-type G domain. Residue asparagine 30–threonine 35 participates in ATP binding. 2 residues coordinate Mg(2+): serine 34 and threonine 55. Threonine 89 bears the Phosphothreonine mark. Residue lysine 98 forms a Glycyl lysine isopeptide (Lys-Gly) (interchain with G-Cter in ubiquitin) linkage. Residues serine 116 and serine 119 each carry the phosphoserine modification. An ATP-binding site is contributed by leucine 233. Residues aspartate 306–alanine 389 form the TGS domain.

Belongs to the TRAFAC class OBG-HflX-like GTPase superfamily. OBG GTPase family. YchF/OLA1 subfamily. As to quaternary structure, monomer. Interacts with the 26S proteasome subunit RPT6. Mg(2+) is required as a cofactor.

Its subcellular location is the cytoplasm. Hydrolyzes ATP, and can also hydrolyze GTP with lower efficiency. Has lower affinity for GTP. This Saccharomyces cerevisiae (strain ATCC 204508 / S288c) (Baker's yeast) protein is Obg-like ATPase 1.